The sequence spans 406 residues: Sorting nexin-6 (406 aa).

At Met-1 the chain carries N-acetylmethionine. Met-2 is subject to N-acetylmethionine; in Sorting nexin-6, N-terminally processed. An interaction with PIM1 region spans residues Met-2–Asn-179. One can recognise a PX domain in the interval Leu-26 to Leu-173. Residues Ser-41 to Lys-47, Phe-100 to Lys-106, and Glu-114 to Met-117 each bind a 1,2-diacyl-sn-glycero-3-phospho-(1D-myo-inositol-4,5-bisphosphate). A phosphoserine mark is found at Ser-116 and Ser-194. The segment at Glu-182 to Ile-199 is membrane-binding amphipathic helix. The 204-residue stretch at Val-203–Thr-406 folds into the BAR domain.

The protein belongs to the sorting nexin family. As to quaternary structure, forms heterodimers with BAR domain-containing sorting nexins SNX1 and SNX2. The heterodimers are proposed to self-assemble into helical arrays on the membrane to stabilize and expand local membrane curvature underlying endosomal tubule formation. Thought to be a component of the originally described retromer complex (also called SNX-BAR retromer) which is a pentamer containing the heterotrimeric retromer cargo-selective complex (CSC), also described as vacuolar protein sorting subcomplex (VPS), and a heterodimeric membrane-deforming subcomplex formed between SNX1 or SNX2 and SNX5 or SNX6 (also called SNX-BAR subcomplex); the respective CSC and SNX-BAR subcomplexes associate with low affinity. Interacts with SNX1, SNX2, VPS26A, VPS29, VPS35, CDKN1B, TGFB receptors, BACE1, BRMS1, PIP5K1C isoform 3. Interacts with DCTN1; the association with DCTN1 is involved in movement of retromer-c ontaining vesicles toward the TGN. Interacts with CDKN1B and GIT1. Interacts with PIM1; translocating SNX6 to the nucleus. Post-translationally, in vitro phosphorylated by PIM1; not affecting PIM1-dependent nuclear translocation.

It is found in the early endosome. The protein localises to the early endosome membrane. It localises to the cytoplasmic vesicle. Its subcellular location is the cytoplasm. The protein resides in the nucleus. In terms of biological role, involved in several stages of intracellular trafficking. Interacts with membranes phosphatidylinositol 3,4-bisphosphate and/or phosphatidylinositol 4,5-bisphosphate. Acts in part as component of the retromer membrane-deforming SNX-BAR subcomplex. The SNX-BAR retromer mediates retrograde transport of cargo proteins from endosomes to the trans-Golgi network (TGN) and is involved in endosome-to-plasma membrane transport for cargo protein recycling. The SNX-BAR subcomplex functions to deform the donor membrane into a tubular profile called endosome-to-TGN transport carrier (ETC). Does not have in vitro vesicle-to-membrane remodeling activity. Involved in retrograde endosome-to-TGN transport of lysosomal enzyme receptor IGF2R. May function as link between transport vesicles and dynactin. Negatively regulates retrograde transport of BACE1 from the cell surface to the trans-Golgi network. Involved in E-cadherin sorting and degradation; inhibits PIP5K1C isoform 3-mediated E-cadherin degradation. In association with GIT1 involved in EGFR degradation. Promotes lysosomal degradation of CDKN1B. May contribute to transcription regulation. In Homo sapiens (Human), this protein is Sorting nexin-6 (SNX6).